The primary structure comprises 381 residues: Chaperone protein DnaJ (381 aa).

The region spanning 5–73 (DYYEVLGVGK…EKKAAYDQYG (69 aa)) is the J domain. The segment at 141–219 (GHEAQIRVPH…CHGQGKLKSQ (79 aa)) adopts a CR-type zinc-finger fold. Residues C154, C157, C171, C174, C193, C196, C207, and C210 each coordinate Zn(2+). CXXCXGXG motif repeat units follow at residues 154–161 (CDHCHGNG), 171–178 (CPTCHGAG), 193–200 (CPKCHGSG), and 207–214 (CTKCHGQG). The disordered stretch occupies residues 357 to 381 (SVHEGGSRHSPQEQSWLDKVKSFFS).

It belongs to the DnaJ family. Homodimer. The cofactor is Zn(2+).

It is found in the cytoplasm. In terms of biological role, participates actively in the response to hyperosmotic and heat shock by preventing the aggregation of stress-denatured proteins and by disaggregating proteins, also in an autonomous, DnaK-independent fashion. Unfolded proteins bind initially to DnaJ; upon interaction with the DnaJ-bound protein, DnaK hydrolyzes its bound ATP, resulting in the formation of a stable complex. GrpE releases ADP from DnaK; ATP binding to DnaK triggers the release of the substrate protein, thus completing the reaction cycle. Several rounds of ATP-dependent interactions between DnaJ, DnaK and GrpE are required for fully efficient folding. Also involved, together with DnaK and GrpE, in the DNA replication of plasmids through activation of initiation proteins. This is Chaperone protein DnaJ from Cupriavidus necator (strain ATCC 17699 / DSM 428 / KCTC 22496 / NCIMB 10442 / H16 / Stanier 337) (Ralstonia eutropha).